The chain runs to 493 residues: ATP synthase subunit beta, chloroplastic (493 aa).

170 to 177 (GGAGVGKT) lines the ATP pocket.

The protein belongs to the ATPase alpha/beta chains family. F-type ATPases have 2 components, CF(1) - the catalytic core - and CF(0) - the membrane proton channel. CF(1) has five subunits: alpha(3), beta(3), gamma(1), delta(1), epsilon(1). CF(0) has four main subunits: a(1), b(1), b'(1) and c(9-12).

Its subcellular location is the plastid. The protein localises to the chloroplast thylakoid membrane. The enzyme catalyses ATP + H2O + 4 H(+)(in) = ADP + phosphate + 5 H(+)(out). Produces ATP from ADP in the presence of a proton gradient across the membrane. The catalytic sites are hosted primarily by the beta subunits. In Staurastrum punctulatum (Green alga), this protein is ATP synthase subunit beta, chloroplastic.